The primary structure comprises 321 residues: 1D-myo-inositol 2-acetamido-2-deoxy-alpha-D-glucopyranoside deacetylase (321 aa).

Zn(2+)-binding residues include His-15, Asp-18, and His-150. Residues 280–321 (PEGERESDLFAGLPPATDGTGAAGAPSATGAANPADAEGGAA) form a disordered region. Residues 290–321 (AGLPPATDGTGAAGAPSATGAANPADAEGGAA) show a composition bias toward low complexity.

Belongs to the MshB deacetylase family. It depends on Zn(2+) as a cofactor.

It carries out the reaction 1D-myo-inositol 2-acetamido-2-deoxy-alpha-D-glucopyranoside + H2O = 1D-myo-inositol 2-amino-2-deoxy-alpha-D-glucopyranoside + acetate. Its function is as follows. Catalyzes the deacetylation of 1D-myo-inositol 2-acetamido-2-deoxy-alpha-D-glucopyranoside (GlcNAc-Ins) in the mycothiol biosynthesis pathway. The polypeptide is 1D-myo-inositol 2-acetamido-2-deoxy-alpha-D-glucopyranoside deacetylase (Streptomyces griseus subsp. griseus (strain JCM 4626 / CBS 651.72 / NBRC 13350 / KCC S-0626 / ISP 5235)).